The following is a 540-amino-acid chain: MLAEWGACLLLAVALLGPGLQAQAMEGVKCGGVLSAPSGNFSSPNFPRLYPYNTECSWLIVVAEGSSVLLTFHAFDLEYHDTCSFDFLEIYNGASPDKGNLLGRFCGKVPPPPFTSSWHVMSVIFHSDKHVASHGFSAGYQKDVCGGVLTGLSGVLTSPEYPNNYPNSMECHWVIRAAGPAHVKLVFVDFQVEGNEECTYDYVAVLGGPGPTRGHHYCGSTRPPTLVSLGHELQVVFKSDFNIGGRGFKAYYFSGECQEVYMAMRGNFSSPQYPSSYPNNIRCHWTIRLPPGYQVKVFFLDLDLEEPNSLTKTCDFDHLAAFDGASEEAPLLGNWCGHHLPPPVTSSHNQLLLLLHTDRSTTRRGFSVAYIGVVPMNVSCSRTDFQILISTQALAPLERTKVYLGSRSCAAQEVGGNLRIQARFDTCGTESQRRNNTSVIVSVLYIDFSAAGREDIHEYEVRCEPRRKEASVHLLSGSHWLGPYAATAEHLQEAPPMDEAEALEGPVSMVAQDTSDIVFLGLCILAGILMVIAIVVLMLL.

The first 22 residues, 1–22 (MLAEWGACLLLAVALLGPGLQA), serve as a signal peptide directing secretion. Residues 23–516 (QAMEGVKCGG…VSMVAQDTSD (494 aa)) lie on the Extracellular side of the membrane. Disulfide bonds link Cys30–Cys56, Cys83–Cys106, Cys145–Cys171, Cys198–Cys218, Cys257–Cys283, and Cys314–Cys336. 3 consecutive CUB domains span residues 30–143 (CGGV…YQKD), 145–255 (CGGV…YFSG), and 257–373 (CQEV…YIGV). A glycan (N-linked (GlcNAc...) asparagine) is linked at Asn40. Asn267 carries an N-linked (GlcNAc...) asparagine glycan. Asn377, Asn435, and Asn436 each carry an N-linked (GlcNAc...) asparagine glycan. A helical membrane pass occupies residues 517-537 (IVFLGLCILAGILMVIAIVVL). Residues 538–540 (MLL) lie on the Cytoplasmic side of the membrane.

It is found in the membrane. This is CUB domain-containing protein 2 (CDCP2) from Homo sapiens (Human).